Reading from the N-terminus, the 287-residue chain is Orotidine 5'-phosphate decarboxylase (287 aa).

Lys-99 acts as the Proton donor in catalysis.

This sequence belongs to the OMP decarboxylase family. Type 2 subfamily.

It carries out the reaction orotidine 5'-phosphate + H(+) = UMP + CO2. It participates in pyrimidine metabolism; UMP biosynthesis via de novo pathway; UMP from orotate: step 2/2. The chain is Orotidine 5'-phosphate decarboxylase from Clostridium novyi (strain NT).